Here is a 441-residue protein sequence, read N- to C-terminus: Glutamate--tRNA ligase 2 (441 aa).

A 'HIGH' region motif is present at residues 6-16 (PSPTGDMHIGN). The short motif at 231–235 (KMSKR) is the 'KMSKS' region element. Lys234 lines the ATP pocket.

The protein belongs to the class-I aminoacyl-tRNA synthetase family. Glutamate--tRNA ligase type 1 subfamily. As to quaternary structure, monomer.

It is found in the cytoplasm. It carries out the reaction tRNA(Glu) + L-glutamate + ATP = L-glutamyl-tRNA(Glu) + AMP + diphosphate. In terms of biological role, catalyzes the attachment of glutamate to tRNA(Glu) in a two-step reaction: glutamate is first activated by ATP to form Glu-AMP and then transferred to the acceptor end of tRNA(Glu). The sequence is that of Glutamate--tRNA ligase 2 from Helicobacter hepaticus (strain ATCC 51449 / 3B1).